A 66-amino-acid polypeptide reads, in one-letter code: Conotoxin Cal5.2 (66 aa).

The signal sequence occupies residues Met-1–Thr-20. The propeptide occupies Phe-21 to Gln-51. Valine amide is present on Val-65.

Belongs to the conotoxin T superfamily. Post-translationally, contains 2 disulfide bonds that can be either 'C1-C3, C2-C4' or 'C1-C4, C2-C3', since these disulfide connectivities have been observed for conotoxins with cysteine framework V (for examples, see AC P0DQQ7 and AC P81755). As to expression, expressed by the venom duct.

Its subcellular location is the secreted. Its function is as follows. Probable neurotoxin with unknown target. Possibly targets ion channels. The chain is Conotoxin Cal5.2 from Californiconus californicus (California cone).